The primary structure comprises 687 residues: Ataxin-1-like (687 aa).

Residues 1 to 19 (MKPVHERSQECLPPKKRDL) show a composition bias toward basic and acidic residues. Disordered regions lie at residues 1–46 (MKPV…SEWS), 185–223 (ATPP…LDLA), and 261–294 (SALE…KGES). The segment at 20–197 (PVTSEDMGRT…PPQAASPAQS (178 aa)) is interaction with NCOR2 and ATXN1. The self-association stretch occupies residues 20 to 197 (PVTSEDMGRT…PPQAASPAQS (178 aa)). Composition is skewed to polar residues over residues 28–43 (RTTS…SDAS) and 198–219 (FNKS…NTQP). Basic and acidic residues predominate over residues 272–283 (RQRERNVRRESE). S282 carries the phosphoserine modification. At T328 the chain carries Phosphothreonine. The tract at residues 356–379 (DEPSPLNLSHHNLDHQGEGRGSAR) is disordered. S359 is modified (phosphoserine). The 132-residue stretch at 455–586 (PPPVTSSHLP…SISLQSLNSN (132 aa)) folds into the AXH domain. The tract at residues 587-649 (SVSQASCAPP…PGAQACWPAP (63 aa)) is disordered.

It belongs to the ATXN1 family. As to quaternary structure, homodimer. Interacts (via AXH domain) with NCOR2. Interacts with ATXN1 and CIC. Directly interacts with RBPJ; this interaction is disrupted in the presence of Notch intracellular domain. Competes with ATXN1 for RBPJ-binding. Found in a complex with CIC and ATXN1. As to expression, expressed in the cortex and hypothalamus (at protein level). Expressed in neuronal cells. Highly expressed in Purkinje cells of cerebellum.

Its subcellular location is the nucleus. It is found in the cell projection. The protein localises to the dendrite. Chromatin-binding factor that repress Notch signaling in the absence of Notch intracellular domain by acting as a CBF1 corepressor. Binds to the HEY promoter and might assist, along with NCOR2, RBPJ-mediated repression. Can suppress the cytotoxicity of ATXN1 in spinocerebellar ataxia type 1 (SCA1). In concert with CIC and ATXN1, involved in brain development. This Mus musculus (Mouse) protein is Ataxin-1-like (Atxn1l).